A 418-amino-acid chain; its full sequence is Putative ion-transport protein YfeO (418 aa).

The next 12 helical transmembrane spans lie at leucine 10–valine 30, aspartate 54–isoleucine 74, alanine 99–proline 119, glutamate 120–proline 140, isoleucine 149–isoleucine 169, leucine 186–proline 206, isoleucine 223–cysteine 243, valine 258–valine 278, aspartate 300–phenylalanine 320, glycine 322–histidine 342, valine 343–valine 363, and leucine 371–methionine 391.

This sequence belongs to the chloride channel (TC 2.A.49) family.

The protein resides in the cell membrane. The chain is Putative ion-transport protein YfeO from Escherichia coli (strain 55989 / EAEC).